The primary structure comprises 1091 residues: Constitutive coactivator of PPAR-gamma-like protein 2 (1091 aa).

Positions 35–53 (QQQHLHRQLPPAALAPGAP) are enriched in low complexity. Disordered regions lie at residues 35-105 (QQQH…HPPP), 503-575 (NCLT…SEPH), 966-1010 (SRSS…QGSS), and 1037-1077 (VEEK…KNHV). Omega-N-methylarginine is present on R57. The span at 82-95 (SRHHHPAHHFHHHG) shows a compositional bias: basic residues. Residues 532 to 544 (GSEQITEAVQQQP) are compositionally biased toward polar residues. Over residues 966 to 976 (SRSSRSRGSFG) the composition is skewed to low complexity. Omega-N-methylarginine is present on R972. Basic and acidic residues predominate over residues 1062–1077 (SDDHCLPVKNGEKNHV).

It belongs to the constitutive coactivator of PPAR-gamma family.

This is Constitutive coactivator of PPAR-gamma-like protein 2 (Fam120c) from Mus musculus (Mouse).